A 177-amino-acid chain; its full sequence is CDP-diacylglycerol--serine O-phosphatidyltransferase (177 aa).

5 helical membrane passes run 4–24 (IPCM…HSLL), 28–48 (IHSA…DGMA), 77–97 (MLAY…CALT), 116–136 (LPTF…ILSF), and 140–160 (PILL…KIKF).

Belongs to the CDP-alcohol phosphatidyltransferase class-I family.

The protein localises to the cell membrane. It carries out the reaction a CDP-1,2-diacyl-sn-glycerol + L-serine = a 1,2-diacyl-sn-glycero-3-phospho-L-serine + CMP + H(+). This Bacillus subtilis (strain 168) protein is CDP-diacylglycerol--serine O-phosphatidyltransferase (pssA).